The chain runs to 183 residues: Putative lipoprotein LpqE (183 aa).

The first 30 residues, 1-30 (MSRFKISLPALATRVAVLGFLTLMASVLGG), serve as a signal peptide directing secretion. C31 carries the N-palmitoyl cysteine lipid modification. C31 carries the S-diacylglycerol cysteine lipid modification.

Its subcellular location is the cell membrane. This Mycobacterium leprae (strain TN) protein is Putative lipoprotein LpqE (lpqE).